The chain runs to 103 residues: MVEILLAFNIDVYVLMDEDPGNQSTQQLISRIRNLIGDKLFLQSPNLEGIFNFDQIRRDHGIQRNKFSKEIALKVLPTWFESNSVPPVYESLKNIIGVTNENG.

This is an uncharacterized protein from Archaeoglobus fulgidus (strain ATCC 49558 / DSM 4304 / JCM 9628 / NBRC 100126 / VC-16).